The following is a 182-amino-acid chain: Unknown protein 1 (182 aa).

The chain is Unknown protein 1 from Helianthus annuus (Common sunflower).